Consider the following 566-residue polypeptide: 15-cis-phytoene desaturase, chloroplastic/chromoplastic (566 aa).

A chloroplast and chromoplast-targeting transit peptide spans 1–86 (MVVFGNVSAA…ASLSASFRSA (86 aa)). FAD is bound by residues Ala-103, 122-123 (EA), Lys-130, 147-148 (HI), and Tyr-153. Arg-288 contributes to the substrate binding site. Residues Ile-330 and Asp-519 each coordinate FAD. Residue Ala-527 coordinates substrate. Residue Met-529 participates in FAD binding.

This sequence belongs to the carotenoid/retinoid oxidoreductase family. Homotetramer. FAD serves as cofactor.

It localises to the plastid. The protein resides in the chloroplast. Its subcellular location is the chromoplast. The protein localises to the membrane. The catalysed reaction is 2 a plastoquinone + 15-cis-phytoene = 9,9',15-tri-cis-zeta-carotene + 2 a plastoquinol. It participates in carotenoid biosynthesis; lycopene biosynthesis. Functionally, converts phytoene into zeta-carotene via the intermediary of phytofluene by the symmetrical introduction of two double bonds at the C-11 and C-11' positions of phytoene with a concomitant isomerization of two neighboring double bonds at the C9 and C9' positions from trans to cis. The protein is 15-cis-phytoene desaturase, chloroplastic/chromoplastic (PDS) of Arabidopsis thaliana (Mouse-ear cress).